Reading from the N-terminus, the 145-residue chain is 3-dehydroquinate dehydratase (145 aa).

Tyrosine 22 acts as the Proton acceptor in catalysis. Positions 71, 77, and 84 each coordinate substrate. The active-site Proton donor is the histidine 97. Substrate is bound by residues 98–99 and arginine 108; that span reads IS.

This sequence belongs to the type-II 3-dehydroquinase family. Homododecamer.

The enzyme catalyses 3-dehydroquinate = 3-dehydroshikimate + H2O. The protein operates within metabolic intermediate biosynthesis; chorismate biosynthesis; chorismate from D-erythrose 4-phosphate and phosphoenolpyruvate: step 3/7. In terms of biological role, catalyzes a trans-dehydration via an enolate intermediate. This is 3-dehydroquinate dehydratase from Exiguobacterium sp. (strain ATCC BAA-1283 / AT1b).